The primary structure comprises 105 residues: UPF0145 protein Ping_0381 (105 aa).

It belongs to the UPF0145 family.

The polypeptide is UPF0145 protein Ping_0381 (Psychromonas ingrahamii (strain DSM 17664 / CCUG 51855 / 37)).